Consider the following 406-residue polypeptide: Dual-specificity RNA methyltransferase RlmN (406 aa).

Catalysis depends on glutamate 119, which acts as the Proton acceptor. The 246-residue stretch at 125–370 folds into the Radical SAM core domain; sequence DKGRGTLCVS…AMVRRTRGDD (246 aa). Residues cysteine 132 and cysteine 375 are joined by a disulfide bond. [4Fe-4S] cluster is bound by residues cysteine 139, cysteine 143, and cysteine 146. S-adenosyl-L-methionine is bound by residues 192–193, serine 224, 246–248, and asparagine 332; these read GE and SLH. Cysteine 375 (S-methylcysteine intermediate) is an active-site residue.

It belongs to the radical SAM superfamily. RlmN family. The cofactor is [4Fe-4S] cluster.

The protein resides in the cytoplasm. The enzyme catalyses adenosine(2503) in 23S rRNA + 2 reduced [2Fe-2S]-[ferredoxin] + 2 S-adenosyl-L-methionine = 2-methyladenosine(2503) in 23S rRNA + 5'-deoxyadenosine + L-methionine + 2 oxidized [2Fe-2S]-[ferredoxin] + S-adenosyl-L-homocysteine. It catalyses the reaction adenosine(37) in tRNA + 2 reduced [2Fe-2S]-[ferredoxin] + 2 S-adenosyl-L-methionine = 2-methyladenosine(37) in tRNA + 5'-deoxyadenosine + L-methionine + 2 oxidized [2Fe-2S]-[ferredoxin] + S-adenosyl-L-homocysteine. Its function is as follows. Specifically methylates position 2 of adenine 2503 in 23S rRNA and position 2 of adenine 37 in tRNAs. m2A2503 modification seems to play a crucial role in the proofreading step occurring at the peptidyl transferase center and thus would serve to optimize ribosomal fidelity. In Xylella fastidiosa (strain 9a5c), this protein is Dual-specificity RNA methyltransferase RlmN.